The chain runs to 325 residues: Ribosomal RNA small subunit methyltransferase H (325 aa).

Residues 41–43 (GGH), aspartate 60, tyrosine 87, aspartate 108, and glutamine 115 each bind S-adenosyl-L-methionine. Residues 295 to 325 (DDDEKAANPRAAPVRLRAAERTRASEDRRGS) are disordered. The span at 311 to 325 (RAAERTRASEDRRGS) shows a compositional bias: basic and acidic residues.

This sequence belongs to the methyltransferase superfamily. RsmH family.

It is found in the cytoplasm. It catalyses the reaction cytidine(1402) in 16S rRNA + S-adenosyl-L-methionine = N(4)-methylcytidine(1402) in 16S rRNA + S-adenosyl-L-homocysteine + H(+). Its function is as follows. Specifically methylates the N4 position of cytidine in position 1402 (C1402) of 16S rRNA. The polypeptide is Ribosomal RNA small subunit methyltransferase H (Leifsonia xyli subsp. xyli (strain CTCB07)).